Here is a 312-residue protein sequence, read N- to C-terminus: Small ribosomal subunit protein uS2 (312 aa).

This sequence belongs to the universal ribosomal protein uS2 family.

This Ruthia magnifica subsp. Calyptogena magnifica protein is Small ribosomal subunit protein uS2.